Reading from the N-terminus, the 520-residue chain is N-acetylgalactosamine-6-sulfatase (520 aa).

The N-terminal stretch at 1–23 (MAACTAAQQLLLVLSALGLLAAG) is a signal peptide. Positions 24–377 (APQPPNIVLL…PTMLKGQMMD (354 aa)) are catalytic domain. The Ca(2+) site is built by Asp-36, Asp-37, and Cys-76. Cys-76 acts as the Nucleophile in catalysis. Cys-76 is subject to 3-oxoalanine (Cys). His-139 is a catalytic residue. N-linked (GlcNAc...) asparagine glycosylation occurs at Asn-201. Ca(2+) is bound by residues Asp-286 and Asn-287. A disulfide bridge connects residues Cys-306 and Cys-417. Asn-421 is a glycosylation site (N-linked (GlcNAc...) asparagine). 2 cysteine pairs are disulfide-bonded: Cys-487-Cys-516 and Cys-499-Cys-505.

The protein belongs to the sulfatase family. Homodimer. Requires Ca(2+) as cofactor. Post-translationally, the conversion to 3-oxoalanine (also known as C-formylglycine, FGly), of a serine or cysteine residue in prokaryotes and of a cysteine residue in eukaryotes, is critical for catalytic activity. As to expression, widely expressed. Higher expression in liver and kidney.

The protein localises to the lysosome. The enzyme catalyses Hydrolysis of the 6-sulfate groups of the N-acetyl-D-galactosamine 6-sulfate units of chondroitin sulfate and of the D-galactose 6-sulfate units of keratan sulfate.. This is N-acetylgalactosamine-6-sulfatase (Galns) from Mus musculus (Mouse).